Here is a 473-residue protein sequence, read N- to C-terminus: tRNA-2-methylthio-N(6)-dimethylallyladenosine synthase (473 aa).

The disordered stretch occupies residues 1–21; sequence MTQDSALLQAPEAIPSESLRD. The 121-residue stretch at 26-146 folds into the MTTase N-terminal domain; that stretch reads RKVFIKTYGC…LPEALRRAKQ (121 aa). [4Fe-4S] cluster contacts are provided by C35, C71, C109, C187, C191, and C194. A Radical SAM core domain is found at 173–405; the sequence is RARGVTAFLT…QMLLLKQQQE (233 aa). Residues 408-470 enclose the TRAM domain; the sequence is ESCVGKEIDL…TNSLFAEHAE (63 aa).

Belongs to the methylthiotransferase family. MiaB subfamily. In terms of assembly, monomer. The cofactor is [4Fe-4S] cluster.

It is found in the cytoplasm. It carries out the reaction N(6)-dimethylallyladenosine(37) in tRNA + (sulfur carrier)-SH + AH2 + 2 S-adenosyl-L-methionine = 2-methylsulfanyl-N(6)-dimethylallyladenosine(37) in tRNA + (sulfur carrier)-H + 5'-deoxyadenosine + L-methionine + A + S-adenosyl-L-homocysteine + 2 H(+). Its function is as follows. Catalyzes the methylthiolation of N6-(dimethylallyl)adenosine (i(6)A), leading to the formation of 2-methylthio-N6-(dimethylallyl)adenosine (ms(2)i(6)A) at position 37 in tRNAs that read codons beginning with uridine. The protein is tRNA-2-methylthio-N(6)-dimethylallyladenosine synthase of Rhizobium johnstonii (strain DSM 114642 / LMG 32736 / 3841) (Rhizobium leguminosarum bv. viciae).